The chain runs to 131 residues: MVMTDPIADMLTAIRNANMVRHEKLEVPASKIKREIAEILKREGFIRDYEYIEDNKQGILRIFLKYGPNERVITGLKRISKPGLRVYVKAHEVPRVLNGLGIAILSTSQGVLTDKEARQKGTGGEIIAYVI.

It belongs to the universal ribosomal protein uS8 family. As to quaternary structure, part of the 30S ribosomal subunit. Contacts proteins S5 and S12.

One of the primary rRNA binding proteins, it binds directly to 16S rRNA central domain where it helps coordinate assembly of the platform of the 30S subunit. The chain is Small ribosomal subunit protein uS8 from Geobacillus stearothermophilus (Bacillus stearothermophilus).